The primary structure comprises 100 residues: Tachykinin-4 (100 aa).

Residues 1 to 19 form the signal peptide; that stretch reads MPSSVTLLLLMGLSVCTSA. 2 propeptides span residues 20–55 and 85–100; these read EDGG…LQEV and RASS…QGAE. Positions 80–100 are disordered; it reads GLLGRRASSTKGSVDEDQGAE.

The protein belongs to the tachykinin family.

It localises to the secreted. Functionally, tachykinins are active peptides which excite neurons, evoke behavioral responses, are potent vasodilators and secretagogues, and contract (directly or indirectly) many smooth muscles. This Oryctolagus cuniculus (Rabbit) protein is Tachykinin-4.